The following is a 92-amino-acid chain: Putative regulatory protein CKL_1364 (92 aa).

This sequence belongs to the RemA family.

In Clostridium kluyveri (strain ATCC 8527 / DSM 555 / NBRC 12016 / NCIMB 10680 / K1), this protein is Putative regulatory protein CKL_1364.